A 348-amino-acid chain; its full sequence is Phosphoribosylformylglycinamidine cyclo-ligase (348 aa).

This sequence belongs to the AIR synthase family.

The protein localises to the cytoplasm. It catalyses the reaction 2-formamido-N(1)-(5-O-phospho-beta-D-ribosyl)acetamidine + ATP = 5-amino-1-(5-phospho-beta-D-ribosyl)imidazole + ADP + phosphate + H(+). Its pathway is purine metabolism; IMP biosynthesis via de novo pathway; 5-amino-1-(5-phospho-D-ribosyl)imidazole from N(2)-formyl-N(1)-(5-phospho-D-ribosyl)glycinamide: step 2/2. This is Phosphoribosylformylglycinamidine cyclo-ligase from Geobacter sulfurreducens (strain ATCC 51573 / DSM 12127 / PCA).